Consider the following 80-residue polypeptide: UPF0270 protein AHA_0994 (80 aa).

Belongs to the UPF0270 family.

The sequence is that of UPF0270 protein AHA_0994 from Aeromonas hydrophila subsp. hydrophila (strain ATCC 7966 / DSM 30187 / BCRC 13018 / CCUG 14551 / JCM 1027 / KCTC 2358 / NCIMB 9240 / NCTC 8049).